We begin with the raw amino-acid sequence, 273 residues long: Dermonecrotic toxin LdSicTox-alphaIB3aiii (273 aa).

H5 is a catalytic residue. Residues E25 and D27 each contribute to the Mg(2+) site. Residue H41 is the Nucleophile of the active site. 2 cysteine pairs are disulfide-bonded: C45-C51 and C47-C190. A Mg(2+)-binding site is contributed by D85.

Belongs to the arthropod phospholipase D family. Class II subfamily. Mg(2+) is required as a cofactor. Expressed by the venom gland.

The protein resides in the secreted. It carries out the reaction an N-(acyl)-sphingosylphosphocholine = an N-(acyl)-sphingosyl-1,3-cyclic phosphate + choline. The catalysed reaction is an N-(acyl)-sphingosylphosphoethanolamine = an N-(acyl)-sphingosyl-1,3-cyclic phosphate + ethanolamine. It catalyses the reaction a 1-acyl-sn-glycero-3-phosphocholine = a 1-acyl-sn-glycero-2,3-cyclic phosphate + choline. The enzyme catalyses a 1-acyl-sn-glycero-3-phosphoethanolamine = a 1-acyl-sn-glycero-2,3-cyclic phosphate + ethanolamine. In terms of biological role, dermonecrotic toxins cleave the phosphodiester linkage between the phosphate and headgroup of certain phospholipids (sphingolipid and lysolipid substrates), forming an alcohol (often choline) and a cyclic phosphate. This toxin acts on sphingomyelin (SM). It may also act on ceramide phosphoethanolamine (CPE), lysophosphatidylcholine (LPC) and lysophosphatidylethanolamine (LPE), but not on lysophosphatidylserine (LPS), and lysophosphatidylglycerol (LPG). It acts by transphosphatidylation, releasing exclusively cyclic phosphate products as second products. Induces dermonecrosis, hemolysis, increased vascular permeability, edema, inflammatory response, and platelet aggregation. The protein is Dermonecrotic toxin LdSicTox-alphaIB3aiii of Loxosceles deserta (Desert recluse spider).